The following is a 607-amino-acid chain: Elongation factor 4 (607 aa).

The tr-type G domain maps to 11-193 (SKIRNFSIIA…QIVEKVPAPT (183 aa)). GTP contacts are provided by residues 23–28 (DHGKST) and 140–143 (NKID).

Belongs to the TRAFAC class translation factor GTPase superfamily. Classic translation factor GTPase family. LepA subfamily.

The protein resides in the cell membrane. It carries out the reaction GTP + H2O = GDP + phosphate + H(+). In terms of biological role, required for accurate and efficient protein synthesis under certain stress conditions. May act as a fidelity factor of the translation reaction, by catalyzing a one-codon backward translocation of tRNAs on improperly translocated ribosomes. Back-translocation proceeds from a post-translocation (POST) complex to a pre-translocation (PRE) complex, thus giving elongation factor G a second chance to translocate the tRNAs correctly. Binds to ribosomes in a GTP-dependent manner. This Bacillus anthracis (strain A0248) protein is Elongation factor 4.